A 313-amino-acid chain; its full sequence is D-alanine--D-alanine ligase (313 aa).

Residues 108-308 enclose the ATP-grasp domain; it reads KLVWQQTGVP…YSELVVKVLS (201 aa). 138–193 contacts ATP; it reads VAKLGLPLFVKPASEGSSVAVLKVKTADALPAALEEAATHDKIVIVEKSIEGGGEY. Residues Asp262, Glu275, and Asn277 each coordinate Mg(2+).

It belongs to the D-alanine--D-alanine ligase family. Requires Mg(2+) as cofactor. Mn(2+) serves as cofactor.

It is found in the cytoplasm. It carries out the reaction 2 D-alanine + ATP = D-alanyl-D-alanine + ADP + phosphate + H(+). It participates in cell wall biogenesis; peptidoglycan biosynthesis. Cell wall formation. The chain is D-alanine--D-alanine ligase from Burkholderia cenocepacia (strain ATCC BAA-245 / DSM 16553 / LMG 16656 / NCTC 13227 / J2315 / CF5610) (Burkholderia cepacia (strain J2315)).